Reading from the N-terminus, the 83-residue chain is Large ribosomal subunit protein bL27 (83 aa).

The tract at residues 1-20 (MAHKKGASSSRNGRDSNPQY) is disordered. Over residues 7-19 (ASSSRNGRDSNPQ) the composition is skewed to polar residues.

Belongs to the bacterial ribosomal protein bL27 family.

In Bifidobacterium animalis subsp. lactis (strain AD011), this protein is Large ribosomal subunit protein bL27.